The chain runs to 133 residues: Small ribosomal subunit protein uS8 (133 aa).

This sequence belongs to the universal ribosomal protein uS8 family. In terms of assembly, part of the 30S ribosomal subunit. Contacts proteins S5 and S12.

Functionally, one of the primary rRNA binding proteins, it binds directly to 16S rRNA central domain where it helps coordinate assembly of the platform of the 30S subunit. The polypeptide is Small ribosomal subunit protein uS8 (Micrococcus luteus (Micrococcus lysodeikticus)).